The following is a 195-amino-acid chain: MRTAQVSRNTLETEITVSLNLDGSGTSRLATGVPFLDHMLDQIARHGLIDLDIAAKGDLHIDAHHTVEDTGITLGQAFAKALADKKGIRRYGHAYVPLDEALSRVVIDLSGRPGLEYHVDYTRARIGDFDVDLFLEFFRGFVNHAGVTLHIDNLRGINAHHQAETIFKAFGRALRMAVETDARLGDVTPSTKGAL.

Belongs to the imidazoleglycerol-phosphate dehydratase family.

Its subcellular location is the cytoplasm. It catalyses the reaction D-erythro-1-(imidazol-4-yl)glycerol 3-phosphate = 3-(imidazol-4-yl)-2-oxopropyl phosphate + H2O. Its pathway is amino-acid biosynthesis; L-histidine biosynthesis; L-histidine from 5-phospho-alpha-D-ribose 1-diphosphate: step 6/9. This Thiobacillus denitrificans (strain ATCC 25259 / T1) protein is Imidazoleglycerol-phosphate dehydratase.